The chain runs to 229 residues: 5'-methylthioadenosine/S-adenosylhomocysteine nucleosidase (229 aa).

E12 (proton acceptor) is an active-site residue. Substrate-binding positions include G78, I152, and 173-174; that span reads ME. D197 functions as the Proton donor in the catalytic mechanism.

The protein belongs to the PNP/UDP phosphorylase family. MtnN subfamily.

The catalysed reaction is S-adenosyl-L-homocysteine + H2O = S-(5-deoxy-D-ribos-5-yl)-L-homocysteine + adenine. The enzyme catalyses S-methyl-5'-thioadenosine + H2O = 5-(methylsulfanyl)-D-ribose + adenine. It carries out the reaction 5'-deoxyadenosine + H2O = 5-deoxy-D-ribose + adenine. Its pathway is amino-acid biosynthesis; L-methionine biosynthesis via salvage pathway; S-methyl-5-thio-alpha-D-ribose 1-phosphate from S-methyl-5'-thioadenosine (hydrolase route): step 1/2. In terms of biological role, catalyzes the irreversible cleavage of the glycosidic bond in both 5'-methylthioadenosine (MTA) and S-adenosylhomocysteine (SAH/AdoHcy) to adenine and the corresponding thioribose, 5'-methylthioribose and S-ribosylhomocysteine, respectively. Also cleaves 5'-deoxyadenosine, a toxic by-product of radical S-adenosylmethionine (SAM) enzymes, into 5-deoxyribose and adenine. This is 5'-methylthioadenosine/S-adenosylhomocysteine nucleosidase from Baumannia cicadellinicola subsp. Homalodisca coagulata.